The following is a 656-amino-acid chain: Macrolide export ATP-binding/permease protein MacB (656 aa).

One can recognise an ABC transporter domain in the interval 6-244; it reads LEVSACYRSF…VKAQVDMSLA (239 aa). 42-49 is an ATP binding site; sequence GASGSGKS. Transmembrane regions (helical) follow at residues 277–297, 531–551, 586–606, and 621–641; these read FLTM…VALG, LLIS…VMNI, LVCL…GVVF, and SIVA…FLPA.

It belongs to the ABC transporter superfamily. Macrolide exporter (TC 3.A.1.122) family. As to quaternary structure, homodimer. Part of the tripartite efflux system MacAB-TolC, which is composed of an inner membrane transporter, MacB, a periplasmic membrane fusion protein, MacA, and an outer membrane component, TolC. The complex forms a large protein conduit and can translocate molecules across both the inner and outer membranes. Interacts with MacA.

It localises to the cell inner membrane. Its function is as follows. Part of the tripartite efflux system MacAB-TolC. MacB is a non-canonical ABC transporter that contains transmembrane domains (TMD), which form a pore in the inner membrane, and an ATP-binding domain (NBD), which is responsible for energy generation. Confers resistance against macrolides. The chain is Macrolide export ATP-binding/permease protein MacB from Shewanella oneidensis (strain ATCC 700550 / JCM 31522 / CIP 106686 / LMG 19005 / NCIMB 14063 / MR-1).